A 66-amino-acid polypeptide reads, in one-letter code: MKIFFFIFAALILLAQIFQARTAIHRALICKRMEGHCEAECLTFEVKIGGCRAELTPYCCKKRKKD.

Residues 1–22 (MKIFFFIFAALILLAQIFQART) form the signal peptide. 2 disulfides stabilise this stretch: C37–C51 and C41–C60.

Belongs to the beta-defensin family.

The protein localises to the secreted. Functionally, has antibacterial activity. This chain is Beta-defensin 107A (DEFB107A), found in Macaca fascicularis (Crab-eating macaque).